A 704-amino-acid polypeptide reads, in one-letter code: Elongation factor G (704 aa).

The tr-type G domain occupies 8–291 (DKVRNIGIMA…TVVECLPSPV (284 aa)). Residues 17-24 (AHIDAGKT), 90-94 (DTPGH), and 144-147 (NKMD) contribute to the GTP site.

This sequence belongs to the TRAFAC class translation factor GTPase superfamily. Classic translation factor GTPase family. EF-G/EF-2 subfamily.

It is found in the cytoplasm. Functionally, catalyzes the GTP-dependent ribosomal translocation step during translation elongation. During this step, the ribosome changes from the pre-translocational (PRE) to the post-translocational (POST) state as the newly formed A-site-bound peptidyl-tRNA and P-site-bound deacylated tRNA move to the P and E sites, respectively. Catalyzes the coordinated movement of the two tRNA molecules, the mRNA and conformational changes in the ribosome. The protein is Elongation factor G of Prosthecochloris aestuarii (strain DSM 271 / SK 413).